The sequence spans 213 residues: Orotate phosphoribosyltransferase (213 aa).

5-phospho-alpha-D-ribose 1-diphosphate is bound at residue K26. Residue 34–35 coordinates orotate; it reads FF. Residues 72–73, R98, K99, K102, H104, and 123–131 contribute to the 5-phospho-alpha-D-ribose 1-diphosphate site; these read YK and DDVISAGTS. Positions 127 and 155 each coordinate orotate.

The protein belongs to the purine/pyrimidine phosphoribosyltransferase family. PyrE subfamily. As to quaternary structure, homodimer. Mg(2+) is required as a cofactor.

It carries out the reaction orotidine 5'-phosphate + diphosphate = orotate + 5-phospho-alpha-D-ribose 1-diphosphate. It functions in the pathway pyrimidine metabolism; UMP biosynthesis via de novo pathway; UMP from orotate: step 1/2. Its function is as follows. Catalyzes the transfer of a ribosyl phosphate group from 5-phosphoribose 1-diphosphate to orotate, leading to the formation of orotidine monophosphate (OMP). This Neisseria meningitidis serogroup C (strain 053442) protein is Orotate phosphoribosyltransferase.